Here is a 765-residue protein sequence, read N- to C-terminus: Protein transport protein Sec23A (765 aa).

N-acetylthreonine is present on Thr2. Residues Cys61, Cys66, Cys85, and Cys88 each coordinate Zn(2+). Thr308 is subject to Phosphothreonine. One copy of the Gelsolin-like repeat lies at 632–718 (PEPVLLDSSS…EHGGSQARFL (87 aa)).

Belongs to the SEC23/SEC24 family. SEC23 subfamily. In terms of assembly, COPII is composed of at least five proteins: the Sec23/24 complex, the Sec13/31 complex and Sar1. Interacts with SEC23IP. Interacts with HTR4. Interacts with SEC16A. Interacts with SLC6A4. Interacts (as part of the Sec23/24 complex) with SEC22B; recruits SEC22B into COPII-coated vesicles and allows the transport of this cargo from the endoplasmic reticulum to the Golgi. Interacts (via Gelsolin-like repeat) with MIA2 and MIA3; specifically involved in the transport of large cargos like the collagen COL7A1. Interacts with DDHD1. Interacts with TMEM39A. Interacts with SACM1L; this interaction is reduced in the absence of TMEM39A. Interacts with kinase FAM20C; transport of FAM20C from the endoplasmic reticulum to the Golgi is likely to be mediated by COPII vesicles.

Its subcellular location is the cytoplasmic vesicle. The protein resides in the COPII-coated vesicle membrane. It localises to the endoplasmic reticulum membrane. The protein localises to the cytoplasm. It is found in the cytosol. Its function is as follows. Component of the coat protein complex II (COPII) which promotes the formation of transport vesicles from the endoplasmic reticulum (ER). The coat has two main functions, the physical deformation of the endoplasmic reticulum membrane into vesicles and the selection of cargo molecules for their transport to the Golgi complex. Required for the translocation of insulin-induced glucose transporter SLC2A4/GLUT4 to the cell membrane. This Pongo abelii (Sumatran orangutan) protein is Protein transport protein Sec23A.